A 49-amino-acid chain; its full sequence is Venom peptide 3 (49 aa).

The N-terminal stretch at 1–23 (MRFTFVLVIAATVAVLGFFGINA) is a signal peptide. AXPX repeat units follow at residues 23–26 (AEPM) and 31–34 (AEPY). The propeptide occupies 24–37 (EPMPDPHAEPYPDA). L48 bears the Leucine amide mark.

In terms of tissue distribution, expressed by the venom gland.

Its subcellular location is the secreted. The chain is Venom peptide 3 from Eumenes pomiformis (Potter wasp).